The following is a 204-amino-acid chain: Small ribosomal subunit protein uS4c (204 aa).

Residues 90–150 (MRLDNILYRL…GKKTDQLKTI (61 aa)) enclose the S4 RNA-binding domain.

The protein belongs to the universal ribosomal protein uS4 family. In terms of assembly, part of the 30S ribosomal subunit. Contacts protein S5. The interaction surface between S4 and S5 is involved in control of translational fidelity.

The protein localises to the plastid. The protein resides in the chloroplast. Its function is as follows. One of the primary rRNA binding proteins, it binds directly to 16S rRNA where it nucleates assembly of the body of the 30S subunit. Functionally, with S5 and S12 plays an important role in translational accuracy. This is Small ribosomal subunit protein uS4c (rps4) from Gnetum parvifolium (Small-leaved jointfir).